Reading from the N-terminus, the 287-residue chain is Large ribosomal subunit protein uL2 (287 aa).

The segment at 222–266 (RGIRPTVRGSAMNPNDHPHGGGEGRSPVGRDAPRTPWGKRHMGVK) is disordered.

Belongs to the universal ribosomal protein uL2 family. In terms of assembly, part of the 50S ribosomal subunit. Forms a bridge to the 30S subunit in the 70S ribosome.

Its function is as follows. One of the primary rRNA binding proteins. Required for association of the 30S and 50S subunits to form the 70S ribosome, for tRNA binding and peptide bond formation. It has been suggested to have peptidyltransferase activity; this is somewhat controversial. Makes several contacts with the 16S rRNA in the 70S ribosome. This chain is Large ribosomal subunit protein uL2, found in Mycoplasma pneumoniae (strain ATCC 29342 / M129 / Subtype 1) (Mycoplasmoides pneumoniae).